The primary structure comprises 539 residues: Dihydrolipoyllysine-residue acetyltransferase component 3 of pyruvate dehydrogenase complex, mitochondrial (539 aa).

A mitochondrion-targeting transit peptide spans 1 to 102; sequence MAYASRIINH…SCLMQSARGF (102 aa). In terms of domain architecture, Lipoyl-binding spans 111–187; that stretch reads HQEIGMPSLS…QVGEVIAITV (77 aa). Lys152 is subject to N6-lipoyllysine. Residues 195 to 247 form a disordered region; it reads KFKDYTPSSTADAAPTKAEPTPAPPKEEKVKQPSSPPEPKASKPSTPPTGDRV. The span at 204 to 214 shows a compositional bias: low complexity; it reads TADAAPTKAEP. One can recognise a Peripheral subunit-binding (PSBD) domain in the interval 248-285; the sequence is FASPLARKLAEDNNVPLSDIEGTGPEGRIVKADIDEYL. Residues His512 and Asp516 contribute to the active site.

This sequence belongs to the 2-oxoacid dehydrogenase family. The cofactor is (R)-lipoate.

It localises to the mitochondrion matrix. The catalysed reaction is N(6)-[(R)-dihydrolipoyl]-L-lysyl-[protein] + acetyl-CoA = N(6)-[(R)-S(8)-acetyldihydrolipoyl]-L-lysyl-[protein] + CoA. Its function is as follows. The pyruvate dehydrogenase complex catalyzes the overall conversion of pyruvate to acetyl-CoA and CO(2). It contains multiple copies of three enzymatic components: pyruvate dehydrogenase (E1), dihydrolipoamide acetyltransferase (E2) and lipoamide dehydrogenase (E3). This Arabidopsis thaliana (Mouse-ear cress) protein is Dihydrolipoyllysine-residue acetyltransferase component 3 of pyruvate dehydrogenase complex, mitochondrial.